The chain runs to 515 residues: Maturase K (515 aa).

It belongs to the intron maturase 2 family. MatK subfamily.

It is found in the plastid. The protein localises to the chloroplast. Its function is as follows. Usually encoded in the trnK tRNA gene intron. Probably assists in splicing its own and other chloroplast group II introns. In Picea pungens (Colorado spruce), this protein is Maturase K.